Consider the following 396-residue polypeptide: Phosphoglycerate kinase (396 aa).

Substrate contacts are provided by residues Asp21–Asn23, Arg36, His59–Lys62, Arg119, and Arg156. Residues Lys206, Gly294, Glu325, and Gly352–Ser355 contribute to the ATP site.

The protein belongs to the phosphoglycerate kinase family. As to quaternary structure, monomer.

It is found in the cytoplasm. The catalysed reaction is (2R)-3-phosphoglycerate + ATP = (2R)-3-phospho-glyceroyl phosphate + ADP. Its pathway is carbohydrate degradation; glycolysis; pyruvate from D-glyceraldehyde 3-phosphate: step 2/5. The chain is Phosphoglycerate kinase from Listeria monocytogenes serotype 4b (strain CLIP80459).